A 306-amino-acid chain; its full sequence is Uricase (306 aa).

Residues Lys5 and Thr65 each act as charge relay system in the active site. The urate site is built by Thr65, Asp66, Phe175, Arg192, Ile240, Gln241, and Asn267. Positions 281–306 are disordered; the sequence is AKVLREPPRPTGYQQFSMDRSDLEEQ.

Belongs to the uricase family.

The catalysed reaction is urate + O2 + H2O = 5-hydroxyisourate + H2O2. It functions in the pathway purine metabolism; urate degradation; (S)-allantoin from urate: step 1/3. Catalyzes the oxidation of uric acid to 5-hydroxyisourate, which is further processed to form (S)-allantoin. The polypeptide is Uricase (Halalkalicoccus jeotgali (strain DSM 18796 / CECT 7217 / JCM 14584 / KCTC 4019 / B3)).